Reading from the N-terminus, the 149-residue chain is Putative eggshell protein (149 aa).

6 consecutive repeat copies span residues Tyr-1–Lys-5, Tyr-6–Lys-10, Tyr-11–Lys-15, Tyr-16–Lys-20, Tyr-21–Lys-25, and Tyr-26–Lys-30. The segment at Tyr-1–Lys-64 is 13 X 5 AA approximate tandem repeats of Y-G-Y-[DE]-K. The 7; truncated repeat unit spans residues Gly-31 to Lys-34. Repeat copies occupy residues Tyr-35–Lys-39, Tyr-40–Lys-44, and Tyr-45–Lys-49. Residues Tyr-50 to Lys-54 form an 11; approximate repeat. Repeat 12 spans residues Tyr-55 to Lys-59. One copy of the 13; approximate repeat lies at Tyr-60–Lys-64. Residues Tyr-105 to His-124 are compositionally biased toward basic and acidic residues. Positions Tyr-105–Tyr-149 are disordered. Basic residues predominate over residues Asp-125–His-141.

This chain is Putative eggshell protein, found in Schistosoma mansoni (Blood fluke).